Here is a 371-residue protein sequence, read N- to C-terminus: tRNA-specific 2-thiouridylase MnmA (371 aa).

ATP contacts are provided by residues 22 to 29 and M48; that span reads GLSGGVDS. The tract at residues 108-110 is interaction with target base in tRNA; the sequence is NPD. Residue C113 is the Nucleophile of the active site. A disulfide bridge connects residues C113 and C209. Residue G137 coordinates ATP. An interaction with tRNA region spans residues 159-161; it reads KDQ. C209 serves as the catalytic Cysteine persulfide intermediate.

Belongs to the MnmA/TRMU family.

It localises to the cytoplasm. It catalyses the reaction S-sulfanyl-L-cysteinyl-[protein] + uridine(34) in tRNA + AH2 + ATP = 2-thiouridine(34) in tRNA + L-cysteinyl-[protein] + A + AMP + diphosphate + H(+). Its function is as follows. Catalyzes the 2-thiolation of uridine at the wobble position (U34) of tRNA, leading to the formation of s(2)U34. The sequence is that of tRNA-specific 2-thiouridylase MnmA from Coxiella burnetii (strain CbuK_Q154) (Coxiella burnetii (strain Q154)).